A 377-amino-acid chain; its full sequence is Lactosylceramide 1,3-N-acetyl-beta-D-glucosaminyltransferase A (377 aa).

Residues 1–12 (MLISARRLRRCQ) are Cytoplasmic-facing. The helical; Signal-anchor for type II membrane protein transmembrane segment at 13–30 (FLQLLASCFVLSLMALLV) threads the bilayer. Topologically, residues 31-377 (QEDNSLISHV…DTYPCSAAWS (347 aa)) are lumenal. N-linked (GlcNAc...) asparagine glycosylation is found at asparagine 56, asparagine 167, and asparagine 275.

The protein belongs to the glycosyltransferase 31 family.

It localises to the golgi apparatus membrane. It catalyses the reaction a beta-D-Gal-(1-&gt;4)-beta-D-Glc-(1&lt;-&gt;1)-Cer(d18:1(4E)) + UDP-N-acetyl-alpha-D-glucosamine = a beta-D-GlcNAc-(1-&gt;3)-beta-D-Gal-(1-&gt;4)-beta-D-Glc-(1&lt;-&gt;1)-Cer(d18:1(4E)) + UDP + H(+). It carries out the reaction a neolactoside nLc4Cer(d18:1(4E)) + UDP-N-acetyl-alpha-D-glucosamine = a neolactoside IV(3)-beta-GlcNAc-nLc4Cer(d18:1(4E)) + UDP + H(+). It participates in protein modification; protein glycosylation. Beta-1,3-N-acetylglucosaminyltransferase that plays a key role in the synthesis of lacto- or neolacto-series carbohydrate chains on glycolipids. The chain is Lactosylceramide 1,3-N-acetyl-beta-D-glucosaminyltransferase A (b3gnt5-a) from Xenopus laevis (African clawed frog).